The primary structure comprises 412 residues: Divalent metal cation transporter MntH (412 aa).

At 1–19 (MTNYRVESSSGRAARKMRL) the chain is on the cytoplasmic side. The helical transmembrane segment at 20 to 39 (ALMGPAFIAAIGYIDPGNFA) threads the bilayer. The Periplasmic segment spans residues 40-51 (TNIQAGASFGYQ). A helical membrane pass occupies residues 52 to 71 (LLWVVVWANLMAMLIQILSA). At 72 to 95 (KLGIATGKNLAEQIRDHYPRPVVW) the chain is on the cytoplasmic side. A helical transmembrane segment spans residues 96–118 (FYWVQAEIIAMATDLAEFIGAAI). Residues 119–125 (GFKLILG) lie on the Periplasmic side of the membrane. A helical transmembrane segment spans residues 126-145 (VSLLQGAVLTGIATFLILML). Topologically, residues 146 to 155 (QRRGQKPLEK) are cytoplasmic. The helical transmembrane segment at 156-175 (VIGGLLLFVAAAYIVELIFS) threads the bilayer. The Periplasmic portion of the chain corresponds to 176 to 196 (QPNLAQLGKGMVIPSLPTSEA). A helical membrane pass occupies residues 197–220 (VFLAAGVLGATIMPHVIYLHSSLT). Residues 221-238 (QHLHGGSRQQRYSATKWD) lie on the Cytoplasmic side of the membrane. Residues 239-258 (VAIAMTIAGFVNLVMMATAA) form a helical membrane-spanning segment. Residues 259 to 276 (AAFHFSGHTGVADLDEAY) lie on the Periplasmic side of the membrane. Residues 277–297 (LTLQPLLSHAAATVFGLSLVA) form a helical membrane-spanning segment. Over 298–327 (AGLSSTVVGTLAGQVVMQGFIRFHIPLWVR) the chain is Cytoplasmic. A helical membrane pass occupies residues 328–344 (RTVTMLPSFIVILMGLD). Topologically, residues 345–350 (PTRILV) are periplasmic. The chain crosses the membrane as a helical span at residues 351-370 (MSQVLLSFGIALALVPLLIF). Over 371-387 (TSDSKLMGDLVNSKRVK) the chain is Cytoplasmic. Residues 388-406 (QTGWVIVVLVVALNIWLLV) traverse the membrane as a helical segment. At 407 to 412 (GTALGL) the chain is on the periplasmic side.

This sequence belongs to the NRAMP family.

Its subcellular location is the cell inner membrane. Functionally, h(+)-stimulated, divalent metal cation uptake system. The sequence is that of Divalent metal cation transporter MntH from Shigella flexneri serotype 5b (strain 8401).